A 156-amino-acid chain; its full sequence is Type IV major fimbrial protein FimA (156 aa).

A propeptide spans 1 to 7 (MKSLQKG) (leader sequence). Position 8 is an N-methylphenylalanine (Phe8). A helical transmembrane segment spans residues 8–28 (FTLIELMIVVAIIGILAAIAI). 2 disulfides stabilise this stretch: Cys57-Cys67 and Cys140-Cys153.

Belongs to the N-Me-Phe pilin family. The pili are polar flexible filaments of about 5.4 nanometers diameter and 2.5 micrometers average length; they consist of only a single polypeptide chain arranged in a helical configuration of five subunits per turn in the assembled pilus.

Its subcellular location is the fimbrium. The protein resides in the membrane. Functionally, major component of the type IV fimbriae that plays an essential role in twitching motility, natural transformation, and protease secretion. This Dichelobacter nodosus (Bacteroides nodosus) protein is Type IV major fimbrial protein FimA (fimA).